The sequence spans 145 residues: D-aminoacyl-tRNA deacylase (145 aa).

A Gly-cisPro motif, important for rejection of L-amino acids motif is present at residues 137 to 138 (GP).

This sequence belongs to the DTD family. As to quaternary structure, homodimer.

It is found in the cytoplasm. It carries out the reaction glycyl-tRNA(Ala) + H2O = tRNA(Ala) + glycine + H(+). The enzyme catalyses a D-aminoacyl-tRNA + H2O = a tRNA + a D-alpha-amino acid + H(+). Functionally, an aminoacyl-tRNA editing enzyme that deacylates mischarged D-aminoacyl-tRNAs. Also deacylates mischarged glycyl-tRNA(Ala), protecting cells against glycine mischarging by AlaRS. Acts via tRNA-based rather than protein-based catalysis; rejects L-amino acids rather than detecting D-amino acids in the active site. By recycling D-aminoacyl-tRNA to D-amino acids and free tRNA molecules, this enzyme counteracts the toxicity associated with the formation of D-aminoacyl-tRNA entities in vivo and helps enforce protein L-homochirality. This chain is D-aminoacyl-tRNA deacylase, found in Teredinibacter turnerae (strain ATCC 39867 / T7901).